A 367-amino-acid chain; its full sequence is Germination protease (367 aa).

Positions 1–15 are excised as a propeptide; it reads MKEPLDLSKYSVRTD.

This sequence belongs to the peptidase A25 family. As to quaternary structure, homotetramer. Post-translationally, autoproteolytically processed. The inactive tetrameric zymogen termed p46 autoprocesses to a smaller form termed p41, which is active only during spore germination.

The enzyme catalyses Endopeptidase action with P4 Glu or Asp, P1 preferably Glu &gt; Asp, P1' hydrophobic and P2' Ala.. Its function is as follows. Initiates the rapid degradation of small, acid-soluble proteins during spore germination. This chain is Germination protease, found in Bacillus mycoides (strain KBAB4) (Bacillus weihenstephanensis).